The chain runs to 736 residues: Catalase-peroxidase (736 aa).

The interval 1–25 is disordered; that stretch reads MSENGKCPVTGKTSKPVAGGGTSNQ. The segment at residues 96-224 is a cross-link (tryptophyl-tyrosyl-methioninium (Trp-Tyr) (with M-250)); the sequence is WHSAGTYRMG…LAAVQMGLIY (129 aa). Catalysis depends on His97, which acts as the Proton acceptor. Positions 224–250 form a cross-link, tryptophyl-tyrosyl-methioninium (Tyr-Met) (with W-96); that stretch reads YVNPEGPDGNPDPIASGKDVRETFARM. His265 is a heme b binding site. Residues 294–313 form a disordered region; the sequence is GWKSSHGRGKGGDTISSGIE.

It belongs to the peroxidase family. Peroxidase/catalase subfamily. As to quaternary structure, homodimer or homotetramer. Requires heme b as cofactor. In terms of processing, formation of the three residue Trp-Tyr-Met cross-link is important for the catalase, but not the peroxidase activity of the enzyme.

It carries out the reaction H2O2 + AH2 = A + 2 H2O. The catalysed reaction is 2 H2O2 = O2 + 2 H2O. Its function is as follows. Bifunctional enzyme with both catalase and broad-spectrum peroxidase activity. This chain is Catalase-peroxidase, found in Desulfatibacillum aliphaticivorans.